A 228-amino-acid polypeptide reads, in one-letter code: CD302 antigen (228 aa).

A signal peptide spans 1–20; that stretch reads MPHAALSSLVLLSLATAIVA. Residues 21–165 are Extracellular-facing; that stretch reads DCPSSTWVQF…YDKKYLSDNH (145 aa). Residues 30–149 enclose the C-type lectin domain; the sequence is FQGSCYAFLQ…CEISSVEGTL (120 aa). Residue N107 is glycosylated (N-linked (GlcNAc...) asparagine). C125 and C140 are oxidised to a cystine. The helical transmembrane segment at 166–186 threads the bilayer; the sequence is ILISTLVIASTVTLAVLGAII. At 187–228 the chain is on the cytoplasmic side; that stretch reads WFLYRRNARSGFTSFSPAPLSPYSDGCALVVAEEDEYAVQLD.

It is found in the membrane. The protein resides in the cell projection. Its subcellular location is the filopodium. It localises to the cytoplasm. The protein localises to the cell cortex. It is found in the microvillus. Potential multifunctional C-type lectin receptor that may play roles in endocytosis and phagocytosis as well as in cell adhesion and migration. This is CD302 antigen (Cd302) from Mus musculus (Mouse).